Here is a 240-residue protein sequence, read N- to C-terminus: Pyridoxine 5'-phosphate synthase (240 aa).

Position 6 (Asn-6) interacts with 3-amino-2-oxopropyl phosphate. Residue 8–9 (DH) participates in 1-deoxy-D-xylulose 5-phosphate binding. Arg-17 is a 3-amino-2-oxopropyl phosphate binding site. His-42 serves as the catalytic Proton acceptor. Residues Arg-44 and His-49 each contribute to the 1-deoxy-D-xylulose 5-phosphate site. Glu-69 acts as the Proton acceptor in catalysis. Thr-99 contacts 1-deoxy-D-xylulose 5-phosphate. His-193 acts as the Proton donor in catalysis. 3-amino-2-oxopropyl phosphate is bound by residues Gly-194 and 216–217 (GH).

It belongs to the PNP synthase family. As to quaternary structure, homooctamer; tetramer of dimers.

Its subcellular location is the cytoplasm. The catalysed reaction is 3-amino-2-oxopropyl phosphate + 1-deoxy-D-xylulose 5-phosphate = pyridoxine 5'-phosphate + phosphate + 2 H2O + H(+). The protein operates within cofactor biosynthesis; pyridoxine 5'-phosphate biosynthesis; pyridoxine 5'-phosphate from D-erythrose 4-phosphate: step 5/5. Catalyzes the complicated ring closure reaction between the two acyclic compounds 1-deoxy-D-xylulose-5-phosphate (DXP) and 3-amino-2-oxopropyl phosphate (1-amino-acetone-3-phosphate or AAP) to form pyridoxine 5'-phosphate (PNP) and inorganic phosphate. This is Pyridoxine 5'-phosphate synthase from Hydrogenobaculum sp. (strain Y04AAS1).